The primary structure comprises 65 residues: Large ribosomal subunit protein bL35 (65 aa).

The segment at 1 to 23 (MPKIKTNRGAAKRFKKTGTGKVK) is disordered. Positions 10–23 (AAKRFKKTGTGKVK) are enriched in basic residues.

This sequence belongs to the bacterial ribosomal protein bL35 family.

This Trichlorobacter lovleyi (strain ATCC BAA-1151 / DSM 17278 / SZ) (Geobacter lovleyi) protein is Large ribosomal subunit protein bL35.